Reading from the N-terminus, the 360-residue chain is S-adenosylmethionine:tRNA ribosyltransferase-isomerase (360 aa).

This sequence belongs to the QueA family. In terms of assembly, monomer.

Its subcellular location is the cytoplasm. It catalyses the reaction 7-aminomethyl-7-carbaguanosine(34) in tRNA + S-adenosyl-L-methionine = epoxyqueuosine(34) in tRNA + adenine + L-methionine + 2 H(+). It participates in tRNA modification; tRNA-queuosine biosynthesis. Functionally, transfers and isomerizes the ribose moiety from AdoMet to the 7-aminomethyl group of 7-deazaguanine (preQ1-tRNA) to give epoxyqueuosine (oQ-tRNA). This is S-adenosylmethionine:tRNA ribosyltransferase-isomerase from Burkholderia mallei (strain NCTC 10247).